The chain runs to 351 residues: Palmitoyltransferase spe-10 (351 aa).

4 consecutive transmembrane segments (helical) span residues 21–43 (TGWI…LWWS), 60–80 (IQAT…MWSL), 198–218 (YFLL…LTSL), and 241–261 (LFSF…LIIF). In terms of domain architecture, DHHC spans 154–204 (KYCYECGHIKPDRARHCSSCGKCCIKYDHHCPWINMCVTHVNYKYFLLYII).

This sequence belongs to the DHHC palmitoyltransferase family. As to expression, expressed during spermatogenesis in budding and budded spermatids.

The protein localises to the membrane. It catalyses the reaction L-cysteinyl-[protein] + hexadecanoyl-CoA = S-hexadecanoyl-L-cysteinyl-[protein] + CoA. In terms of biological role, involved in spermatogenesis, specifically in the morphogenesis of fibrous body-membranous organelles (FB-MO), which are Golgi-derived organelles used for transporting sperm-specific components, in spermatocytes and in their localization into budding spermatids. Required for the proper formation of spermatids and spermatozoa. The sequence is that of Palmitoyltransferase spe-10 from Caenorhabditis elegans.